Reading from the N-terminus, the 122-residue chain is Large ribosomal subunit protein uL14 (122 aa).

The protein belongs to the universal ribosomal protein uL14 family. In terms of assembly, part of the 50S ribosomal subunit. Forms a cluster with proteins L3 and L19. In the 70S ribosome, L14 and L19 interact and together make contacts with the 16S rRNA in bridges B5 and B8.

Binds to 23S rRNA. Forms part of two intersubunit bridges in the 70S ribosome. This chain is Large ribosomal subunit protein uL14, found in Burkholderia vietnamiensis (strain G4 / LMG 22486) (Burkholderia cepacia (strain R1808)).